We begin with the raw amino-acid sequence, 228 residues long: UPF0758 protein Gura_4138 (228 aa).

Positions 106 to 228 (RFTSPSQVFE…FLSFVDRGMM (123 aa)) constitute an MPN domain. Residues histidine 177, histidine 179, and aspartate 190 each contribute to the Zn(2+) site. The short motif at 177–190 (HNHPTGDPTPSRED) is the JAMM motif element.

Belongs to the UPF0758 family.

The polypeptide is UPF0758 protein Gura_4138 (Geotalea uraniireducens (strain Rf4) (Geobacter uraniireducens)).